Consider the following 336-residue polypeptide: Succinylglutamate desuccinylase (336 aa).

The Zn(2+) site is built by histidine 59, glutamate 62, and histidine 151. Glutamate 215 is a catalytic residue.

Belongs to the AspA/AstE family. Succinylglutamate desuccinylase subfamily. The cofactor is Zn(2+).

The catalysed reaction is N-succinyl-L-glutamate + H2O = L-glutamate + succinate. It functions in the pathway amino-acid degradation; L-arginine degradation via AST pathway; L-glutamate and succinate from L-arginine: step 5/5. Functionally, transforms N(2)-succinylglutamate into succinate and glutamate. The protein is Succinylglutamate desuccinylase of Pseudomonas fluorescens (strain ATCC BAA-477 / NRRL B-23932 / Pf-5).